A 512-amino-acid polypeptide reads, in one-letter code: Histidine ammonia-lyase (512 aa).

A cross-link (5-imidazolinone (Ala-Gly)) is located at residues 145-147 (ASG). Ser-146 bears the 2,3-didehydroalanine (Ser) mark.

This sequence belongs to the PAL/histidase family. Post-translationally, contains an active site 4-methylidene-imidazol-5-one (MIO), which is formed autocatalytically by cyclization and dehydration of residues Ala-Ser-Gly.

Its subcellular location is the cytoplasm. It carries out the reaction L-histidine = trans-urocanate + NH4(+). It functions in the pathway amino-acid degradation; L-histidine degradation into L-glutamate; N-formimidoyl-L-glutamate from L-histidine: step 1/3. The chain is Histidine ammonia-lyase from Pseudomonas fluorescens (strain SBW25).